The chain runs to 410 residues: Arginine biosynthesis bifunctional protein ArgJ (410 aa).

Substrate is bound by residues T158, K184, T195, E282, N405, and T410. Catalysis depends on T195, which acts as the Nucleophile.

This sequence belongs to the ArgJ family. In terms of assembly, heterotetramer of two alpha and two beta chains.

The protein localises to the cytoplasm. The enzyme catalyses N(2)-acetyl-L-ornithine + L-glutamate = N-acetyl-L-glutamate + L-ornithine. It catalyses the reaction L-glutamate + acetyl-CoA = N-acetyl-L-glutamate + CoA + H(+). It participates in amino-acid biosynthesis; L-arginine biosynthesis; L-ornithine and N-acetyl-L-glutamate from L-glutamate and N(2)-acetyl-L-ornithine (cyclic): step 1/1. The protein operates within amino-acid biosynthesis; L-arginine biosynthesis; N(2)-acetyl-L-ornithine from L-glutamate: step 1/4. In terms of biological role, catalyzes two activities which are involved in the cyclic version of arginine biosynthesis: the synthesis of N-acetylglutamate from glutamate and acetyl-CoA as the acetyl donor, and of ornithine by transacetylation between N(2)-acetylornithine and glutamate. The polypeptide is Arginine biosynthesis bifunctional protein ArgJ (Rhodopirellula baltica (strain DSM 10527 / NCIMB 13988 / SH1)).